Here is a 379-residue protein sequence, read N- to C-terminus: Putative acetyl-CoA C-acetyltransferase VraB (379 aa).

Residue Cys-86 is the Acyl-thioester intermediate of the active site. His-338 acts as the Proton acceptor in catalysis.

The protein belongs to the thiolase-like superfamily. Thiolase family.

In Staphylococcus aureus (strain COL), this protein is Putative acetyl-CoA C-acetyltransferase VraB (vraB).